The sequence spans 555 residues: CCR4-NOT transcription complex subunit 6-like (555 aa).

The required for interaction with CNOT1, CNOT3 and CNOT7 stretch occupies residues 1–152; it reads MRLIGMPKEK…NLYQDPDGTR (152 aa). 4 LRR repeats span residues 57-78, 80-101, 103-125, and 126-148; these read HLTA…IAKL, NLVY…LGNM, SLRE…GRLF, and QLQT…YQDP. Residues 158–555 are nuclease domain; sequence MLDNLAVHPE…VNGVHLPNRR (398 aa). E240 lines the Mg(2+) pocket. Residues E240, E276, H360, and P365 each coordinate substrate. Mg(2+) is bound at residue D410. D410 serves as the catalytic Proton donor/acceptor. Substrate-binding residues include N412, N479, and F484.

The protein belongs to the CCR4/nocturin family. As to quaternary structure, component of the CCR4-NOT complex; distinct complexes seem to exist that differ in the participation of probably mutually exclusive catalytic subunits; the complex contains two deadenylase subunits, CNOT6 or CNOT6L, and CNOT7 or CNOT8. Interacts with CNOT1, CNOT3, CNOT7, CNOT8 and CNOT9. Interacts with TOB1. Interacts with NANOS2. Interacts with ZFP36. Interacts with ZFP36L2. Interacts with RBM46. The cofactor is Mg(2+). As to expression, highly expressed in placenta, skeletal muscle, pancreas, testis and leukocytes. Weakly expressed in heart, spleen and thymus.

It localises to the cytoplasm. It is found in the nucleus. The catalysed reaction is Exonucleolytic cleavage of poly(A) to 5'-AMP.. Inhibited by free AMP, and with lesser efficiency also by CMP, GMP, UMP, ATP and neomycin. Its function is as follows. Has 3'-5' poly(A) exoribonuclease activity for synthetic poly(A) RNA substrate. Catalytic component of the CCR4-NOT complex which is one of the major cellular mRNA deadenylases and is linked to various cellular processes including bulk mRNA degradation, miRNA-mediated repression, translational repression during translational initiation and general transcription regulation. Additional complex functions may be a consequence of its influence on mRNA expression. May be involved in the deadenylation-dependent degradation of mRNAs through the 3'-UTR AU-rich element-mediated mechanism. Involved in deadenylation-dependent degradation of CDKN1B mRNA. Its mRNA deadenylase activity can be inhibited by TOB1. Mediates cell proliferation and cell survival and prevents cellular senescence. This chain is CCR4-NOT transcription complex subunit 6-like (CNOT6L), found in Homo sapiens (Human).